Consider the following 123-residue polypeptide: Putative iron-sulfur cluster insertion protein ErpA (123 aa).

Residues C51, C115, and C117 each contribute to the iron-sulfur cluster site.

This sequence belongs to the HesB/IscA family. As to quaternary structure, homodimer. It depends on iron-sulfur cluster as a cofactor.

Functionally, required for insertion of 4Fe-4S clusters. This Burkholderia ambifaria (strain ATCC BAA-244 / DSM 16087 / CCUG 44356 / LMG 19182 / AMMD) (Burkholderia cepacia (strain AMMD)) protein is Putative iron-sulfur cluster insertion protein ErpA.